The sequence spans 659 residues: UvrABC system protein B (659 aa).

Residues 25-414 (EGVRRGAREQ…PSLVVEQIVR (390 aa)) form the Helicase ATP-binding domain. 38–45 (GATGTGKT) contacts ATP. A Beta-hairpin motif is present at residues 91–114 (YYDYYQPEAYIPTTDTYIEKDALI). One can recognise a Helicase C-terminal domain in the interval 431 to 597 (QIDDLYAEIR…TIVKPVRDVI (167 aa)). The UVR domain maps to 620 to 655 (PKVVAKLRKEMMQAAKDLDFERAAEIRDIIFELEKK).

This sequence belongs to the UvrB family. Forms a heterotetramer with UvrA during the search for lesions. Interacts with UvrC in an incision complex.

The protein resides in the cytoplasm. Its function is as follows. The UvrABC repair system catalyzes the recognition and processing of DNA lesions. A damage recognition complex composed of 2 UvrA and 2 UvrB subunits scans DNA for abnormalities. Upon binding of the UvrA(2)B(2) complex to a putative damaged site, the DNA wraps around one UvrB monomer. DNA wrap is dependent on ATP binding by UvrB and probably causes local melting of the DNA helix, facilitating insertion of UvrB beta-hairpin between the DNA strands. Then UvrB probes one DNA strand for the presence of a lesion. If a lesion is found the UvrA subunits dissociate and the UvrB-DNA preincision complex is formed. This complex is subsequently bound by UvrC and the second UvrB is released. If no lesion is found, the DNA wraps around the other UvrB subunit that will check the other stand for damage. This chain is UvrABC system protein B, found in Symbiobacterium thermophilum (strain DSM 24528 / JCM 14929 / IAM 14863 / T).